Consider the following 215-residue polypeptide: UPF0319 protein VVA1446 (215 aa).

The first 21 residues, M1–A21, serve as a signal peptide directing secretion.

This sequence belongs to the UPF0319 family.

This Vibrio vulnificus (strain YJ016) protein is UPF0319 protein VVA1446.